The primary structure comprises 254 residues: Phosphatidylglycerol--prolipoprotein diacylglyceryl transferase (254 aa).

The next 4 helical transmembrane spans lie at 11 to 31, 49 to 69, 84 to 104, and 109 to 129; these read LAIRWYGVVISIGAALGLLLA, FLIAFPSAIIGARLYYVIFEF, QGGLAIHGGIIFGVLAVYIYL, and ESFFEYVDVAAPSIILGQAIG. Arg-130 serves as a coordination point for a 1,2-diacyl-sn-glycero-3-phospho-(1'-sn-glycerol). 3 helical membrane passes run 169-189, 196-216, and 228-248; these read PTFLYESIWNFIVCIFLVYLL, GIVFMAYIGLYSLGRFFIEGL, and VAQLISVLGIILSIFFIYNII.

The protein belongs to the Lgt family.

The protein resides in the cell membrane. It catalyses the reaction L-cysteinyl-[prolipoprotein] + a 1,2-diacyl-sn-glycero-3-phospho-(1'-sn-glycerol) = an S-1,2-diacyl-sn-glyceryl-L-cysteinyl-[prolipoprotein] + sn-glycerol 1-phosphate + H(+). Its pathway is protein modification; lipoprotein biosynthesis (diacylglyceryl transfer). Its function is as follows. Catalyzes the transfer of the diacylglyceryl group from phosphatidylglycerol to the sulfhydryl group of the N-terminal cysteine of a prolipoprotein, the first step in the formation of mature lipoproteins. This Clostridium botulinum (strain Langeland / NCTC 10281 / Type F) protein is Phosphatidylglycerol--prolipoprotein diacylglyceryl transferase.